The primary structure comprises 340 residues: ATPase get3 (340 aa).

34-41 (KGGVGKTT) lines the ATP pocket. The active site involves D63. ATP is bound by residues E242 and N269. Zn(2+) is bound by residues C280 and C283.

It belongs to the arsA ATPase family. Homodimer.

Its subcellular location is the cytoplasm. The protein resides in the endoplasmic reticulum. Its function is as follows. ATPase required for the post-translational delivery of tail-anchored (TA) proteins to the endoplasmic reticulum. Recognizes and selectively binds the transmembrane domain of TA proteins in the cytosol. This complex then targets to the endoplasmic reticulum by membrane-bound receptors, where the tail-anchored protein is released for insertion. This process is regulated by ATP binding and hydrolysis. ATP binding drives the homodimer towards the closed dimer state, facilitating recognition of newly synthesized TA membrane proteins. ATP hydrolysis is required for insertion. Subsequently, the homodimer reverts towards the open dimer state, lowering its affinity for the membrane-bound receptor, and returning it to the cytosol to initiate a new round of targeting. This chain is ATPase get3 (get3), found in Sclerotinia sclerotiorum (strain ATCC 18683 / 1980 / Ss-1) (White mold).